Consider the following 69-residue polypeptide: uncharacterized protein (69 aa).

As to quaternary structure, interacts with the RNA polymerase core.

This is an uncharacterized protein from Bacillus subtilis (strain 168).